The chain runs to 193 residues: Transcriptional regulator RamR (193 aa).

Residues 7–66 (EDKKQALLEAATQAIAQSGIAASTAVIARNAGVAEGTLFRYFATKDELINTLYLHLKQDL) form the HTH tetR-type domain. Residues 29 to 48 (STAVIARNAGVAEGTLFRYF) constitute a DNA-binding region (H-T-H motif).

In terms of assembly, homodimer. May bind DNA either as a homodimer or as a pair of homodimers. Various chemicals reduce DNA-binding in vitro, including bile acids, such as cholic and chenodeoxycholic acids, and antimicrobial drugs, such as berberine, crystal violet, dequalinium, ethidium bromide and rhodamine 6G. Binds small regulatory RNA StyR3.

Its function is as follows. Transcriptional regulator. Represses the transcription of the transcriptional activator RamA and, thereby, leads to repression of the expression of the efflux pump subunits AcrA and AcrB, and TolC. Acts by binding directly to the promoter region of the ramA gene. Promoter binding may be inhibited partially by the small regulatory RNA StyR3, perhaps thereby ensuring a basal level of expression of RamA. The protein is Transcriptional regulator RamR of Salmonella typhimurium (strain LT2 / SGSC1412 / ATCC 700720).